Reading from the N-terminus, the 463-residue chain is MAGAGERKGKKDDNGIGTAIDFVLSNARLVLGVGGAAMLGIATLAVKRMYDRAISAPTSPTRLSHSGKRSWEEPNWMGSPRLLNRDMKTGLSRSLQTLPTDSSTFDTDTFCPPRPKPVARKGQVDLKKSRLRMSLQEKLLTYYRNRAAIPAGEQARAKQAAVDICAELRSFLRAKLPDMPLRDMYLSGSLYDDLQVVTADHIQLIVPLVLEQNLWSCIPGEDTIMNVPGFFLVRRENPEYFPRGSSYWDRCVVGGYLSPKTVADTFEKVVAGSINWPAIGSLLDYVIRPAPPPEALTLEVQYERDKHLFIDFLPSVTLGDTVLVAKPHRLAQYDNLWRLSLRPAETARLRALDQADSGCRSLCLKILKAICKSTPALGHLTASQLTNVILHLAQEEADWSPDMLADRFLQALRGLISYLEAGVLPSALNPKVNLFAELTPEEIDELGYTLYCSLSEPEVLLQT.

At 1–23 (MAGAGERKGKKDDNGIGTAIDFV) the chain is on the mitochondrial intermembrane side. The helical transmembrane segment at 24–46 (LSNARLVLGVGGAAMLGIATLAV) threads the bilayer. Over 47–463 (KRMYDRAISA…LSEPEVLLQT (417 aa)) the chain is Cytoplasmic. Positions 49 to 195 (MYDRAISAPT…LSGSLYDDLQ (147 aa)) are dimerization. Residues serine 55, serine 59, serine 79, and serine 94 each carry the phosphoserine modification. Residues 57–77 (PTSPTRLSHSGKRSWEEPNWM) form a disordered region. Residues 96 to 123 (QTLPTDSSTFDTDTFCPPRPKPVARKGQ) are disordered. Low complexity predominate over residues 100 to 110 (TDSSTFDTDTF). Residues 160–169 (AAVDICAELR) are important for interaction with DNM1L. Residues serine 187, serine 189, and histidine 201 each coordinate ADP. Positions 234–242 (RRENPEYFP) are important for interaction with DNM1L. ADP contacts are provided by serine 340, arginine 342, and lysine 368.

This sequence belongs to the SMCR7 family. As to quaternary structure, homodimer. Interacts with DNM1L. In terms of tissue distribution, expression is relatively high in heart, skeletal muscle, pancreas and kidney.

It localises to the mitochondrion outer membrane. Its function is as follows. Mitochondrial outer membrane protein which regulates mitochondrial fission/fusion dynamics. Promotes the recruitment and association of the fission mediator dynamin-related protein 1 (DNM1L) to the mitochondrial surface independently of the mitochondrial fission FIS1 and MFF proteins. Regulates DNM1L GTPase activity and DNM1L oligomerization. Binds ADP and can also bind GDP, although with lower affinity. Does not bind CDP, UDP, ATP, AMP or GTP. Inhibits DNM1L GTPase activity in the absence of bound ADP. Requires ADP to stimulate DNM1L GTPase activity and the assembly of DNM1L into long, oligomeric tubules with a spiral pattern, as opposed to the ring-like DNM1L oligomers observed in the absence of bound ADP. Does not require ADP for its function in recruiting DNM1L. The sequence is that of Mitochondrial dynamics protein MIEF1 from Homo sapiens (Human).